Consider the following 178-residue polypeptide: Adenine phosphoribosyltransferase (178 aa).

The protein belongs to the purine/pyrimidine phosphoribosyltransferase family. As to quaternary structure, homodimer.

The protein resides in the cytoplasm. It carries out the reaction AMP + diphosphate = 5-phospho-alpha-D-ribose 1-diphosphate + adenine. The protein operates within purine metabolism; AMP biosynthesis via salvage pathway; AMP from adenine: step 1/1. Its function is as follows. Catalyzes a salvage reaction resulting in the formation of AMP, that is energically less costly than de novo synthesis. In Cereibacter sphaeroides (strain ATCC 17025 / ATH 2.4.3) (Rhodobacter sphaeroides), this protein is Adenine phosphoribosyltransferase.